Reading from the N-terminus, the 579-residue chain is Isocitrate dehydrogenase kinase/phosphatase (579 aa).

Residues 324–330 (ADGTPGM) and Lys-345 each bind ATP. The active site involves Asp-380.

Belongs to the AceK family.

The protein resides in the cytoplasm. It catalyses the reaction L-seryl-[isocitrate dehydrogenase] + ATP = O-phospho-L-seryl-[isocitrate dehydrogenase] + ADP + H(+). Its function is as follows. Bifunctional enzyme which can phosphorylate or dephosphorylate isocitrate dehydrogenase (IDH) on a specific serine residue. This is a regulatory mechanism which enables bacteria to bypass the Krebs cycle via the glyoxylate shunt in response to the source of carbon. When bacteria are grown on glucose, IDH is fully active and unphosphorylated, but when grown on acetate or ethanol, the activity of IDH declines drastically concomitant with its phosphorylation. This is Isocitrate dehydrogenase kinase/phosphatase from Xanthomonas axonopodis pv. citri (strain 306).